The following is a 308-amino-acid chain: tRNA dimethylallyltransferase (308 aa).

14 to 21 (GPTASGKT) is a binding site for ATP. Position 16-21 (16-21 (TASGKT)) interacts with substrate. 3 interaction with substrate tRNA regions span residues 39 to 42 (DSAL), 163 to 167 (QRLAR), and 244 to 249 (RCVGYR).

The protein belongs to the IPP transferase family. Monomer. Mg(2+) serves as cofactor.

It carries out the reaction adenosine(37) in tRNA + dimethylallyl diphosphate = N(6)-dimethylallyladenosine(37) in tRNA + diphosphate. Catalyzes the transfer of a dimethylallyl group onto the adenine at position 37 in tRNAs that read codons beginning with uridine, leading to the formation of N6-(dimethylallyl)adenosine (i(6)A). The polypeptide is tRNA dimethylallyltransferase (Shewanella piezotolerans (strain WP3 / JCM 13877)).